The primary structure comprises 327 residues: 2-methoxy-6-polyprenyl-1,4-benzoquinol methylase, mitochondrial (327 aa).

The N-terminal 49 residues, 1–49 (MAAPRSCVLWSYCGHGWSRLAGDCRLPGFRRSWLGATLSARSLSQEKRA), are a transit peptide targeting the mitochondrion. Residues Thr117, Asp171, and 199–200 (DA) contribute to the S-adenosyl-L-methionine site.

This sequence belongs to the class I-like SAM-binding methyltransferase superfamily. MenG/UbiE family. In terms of assembly, component of a multi-subunit COQ enzyme complex, composed of at least COQ3, COQ4, COQ5, COQ6, COQ7 and COQ9. Interacts with PYURF; the interaction is direct, stabilizes COQ5 protein and associates PYURF with COQ enzyme complex.

It is found in the mitochondrion inner membrane. It carries out the reaction 2-methoxy-6-(all-trans-decaprenyl)benzene-1,4-diol + S-adenosyl-L-methionine = 5-methoxy-2-methyl-3-(all-trans-decaprenyl)benzene-1,4-diol + S-adenosyl-L-homocysteine + H(+). Its pathway is cofactor biosynthesis; ubiquinone biosynthesis. Its function is as follows. Methyltransferase required for the conversion of 2-decaprenyl-6-methoxy-1,4-benzoquinol (DDMQH2) to 2-decaprenyl-3-methyl-6-methoxy-1,4-benzoquinol (DMQH2). This chain is 2-methoxy-6-polyprenyl-1,4-benzoquinol methylase, mitochondrial, found in Rattus norvegicus (Rat).